The primary structure comprises 266 residues: ATP synthase subunit a (266 aa).

Transmembrane regions (helical) follow at residues 28–48 (ISFT…AIFM), 90–110 (LIFT…VPLF), 125–145 (VTVT…VGFT), 158–178 (HGTP…SFIL), 187–207 (LFVA…FIVN), 216–236 (AFLA…MIGI), and 239–259 (LEFL…SLYL).

The protein belongs to the ATPase A chain family. F-type ATPases have 2 components, CF(1) - the catalytic core - and CF(0) - the membrane proton channel. CF(1) has five subunits: alpha(3), beta(3), gamma(1), delta(1), epsilon(1). CF(0) has three main subunits: a(1), b(2) and c(9-12). The alpha and beta chains form an alternating ring which encloses part of the gamma chain. CF(1) is attached to CF(0) by a central stalk formed by the gamma and epsilon chains, while a peripheral stalk is formed by the delta and b chains.

It localises to the cell inner membrane. Key component of the proton channel; it plays a direct role in the translocation of protons across the membrane. This chain is ATP synthase subunit a, found in Zymomonas mobilis subsp. mobilis (strain ATCC 31821 / ZM4 / CP4).